The primary structure comprises 345 residues: Prenyltransferase ltmC (345 aa).

Residue His-112 coordinates substrate. Residues Asp-119 and Asp-123 each coordinate Mg(2+). Arg-128 is a binding site for substrate. Residue Asn-130 is glycosylated (N-linked (GlcNAc...) asparagine). The substrate site is built by Lys-212, Thr-213, Gln-243, Asn-250, and Lys-260.

It belongs to the FPP/GGPP synthase family. Mg(2+) serves as cofactor.

It functions in the pathway secondary metabolite biosynthesis. Prenyltransferase; part of the gene cluster that mediates the biosynthesis of lolitrems, indole-diterpene mycotoxins that are potent tremorgens in mammals, and are synthesized by clavicipitaceous fungal endophytes in association with their grass hosts. The geranylgeranyl diphosphate (GGPP) synthase ltmG is proposed to catalyze the first step in lolitrem biosynthesis. LtmG catalyzes a series of iterative condensations of isopentenyl diphosphate (IPP) with dimethylallyl diphosphate (DMAPP), geranyl diphosphate (GPP), and farnesyl diphosphate (FPP), to form GGPP. GGPP then condenses with indole-3-glycerol phosphate to form 3-geranylgeranylindole, an acyclic intermediate, to be incorporated into paxilline. Either ltmG or ltmC could be responsible for this step, as both are putative prenyl transferases. The FAD-dependent monooxygenase ltmM then catalyzes the epoxidation of the two terminal alkenes of the geranylgeranyl moiety, which is subsequently cyclized by ltmB, to paspaline. The cytochrome P450 monooxygenases ltmQ and ltmP can sequentially oxidize paspaline to terpendole E and terpendole F. Alternatively, ltmP converts paspaline to an intermediate which is oxidized by ltmQ to terpendole F. LtmF, ltmK, ltmE and ltmJ appear to be unique to the epichloe endophytes. The prenyltransferase ltmF is involved in the 27-hydroxyl-O-prenylation. The cytochrome P450 monooxygenase ltmK is required for the oxidative acetal ring formation. The multi-functional prenyltransferase ltmE is required for C20- and C21-prenylations of the indole ring of paspalanes and acts together with the cytochrome P450 monooxygenase ltmJ to yield lolitremanes by multiple oxidations and ring closures. The stereoisomer pairs of lolitriol and lolitrem N or lolitrem B and lolitrem F may be attributed to variations in the way in which ring closure can occur under the action of ltmJ. While the major product of this pathway is lolitrem B, the prenyl transferases and cytochrome P450 monooxygenases identified in this pathway have a remarkable versatility in their regio- and stereo-specificities to generate a diverse range of metabolites that are products of a metabolic grid rather than a linear pathway. The sequence is that of Prenyltransferase ltmC from Epichloe festucae var. lolii (Neotyphodium lolii).